The sequence spans 450 residues: Signal recognition particle protein (450 aa).

GTP-binding positions include 107 to 114, 190 to 194, and 248 to 251; these read GLQGVGKT, DTAGR, and TKTD.

The protein belongs to the GTP-binding SRP family. SRP54 subfamily. As to quaternary structure, part of the signal recognition particle protein translocation system, which is composed of SRP and FtsY. SRP is a ribonucleoprotein composed of Ffh and a 4.5S RNA molecule.

Its subcellular location is the cytoplasm. It carries out the reaction GTP + H2O = GDP + phosphate + H(+). Its function is as follows. Involved in targeting and insertion of nascent membrane proteins into the cytoplasmic membrane. Binds to the hydrophobic signal sequence of the ribosome-nascent chain (RNC) as it emerges from the ribosomes. The SRP-RNC complex is then targeted to the cytoplasmic membrane where it interacts with the SRP receptor FtsY. Interaction with FtsY leads to the transfer of the RNC complex to the Sec translocase for insertion into the membrane, the hydrolysis of GTP by both Ffh and FtsY, and the dissociation of the SRP-FtsY complex into the individual components. This chain is Signal recognition particle protein, found in Buchnera aphidicola subsp. Schizaphis graminum (strain Sg).